Reading from the N-terminus, the 369-residue chain is Glutamate 5-kinase (369 aa).

Residue K9 coordinates ATP. Substrate contacts are provided by S49, D136, and N148. ATP-binding positions include 168-169 (TD) and 210-216 (TGGMLTK). The 81-residue stretch at 275–355 (RGGVYVDEGA…KGVFIHRDDW (81 aa)) folds into the PUA domain.

This sequence belongs to the glutamate 5-kinase family.

Its subcellular location is the cytoplasm. It carries out the reaction L-glutamate + ATP = L-glutamyl 5-phosphate + ADP. The protein operates within amino-acid biosynthesis; L-proline biosynthesis; L-glutamate 5-semialdehyde from L-glutamate: step 1/2. Functionally, catalyzes the transfer of a phosphate group to glutamate to form L-glutamate 5-phosphate. In Neisseria meningitidis serogroup A / serotype 4A (strain DSM 15465 / Z2491), this protein is Glutamate 5-kinase.